Consider the following 133-residue polypeptide: Membrane protein FAM174B (133 aa).

The N-terminal stretch at 1–19 (MWLYTFAVALIVIAQEING) is a signal peptide. Residues 20–67 (EPHTRPSSATPLNATLPPQEEGSAQNTTDAAVGSRLSTILRDLPTIKN) lie on the Extracellular side of the membrane. Positions 22–47 (HTRPSSATPLNATLPPQEEGSAQNTT) are disordered. 3 N-linked (GlcNAc...) asparagine glycosylation sites follow: asparagine 32, asparagine 45, and asparagine 67. The chain crosses the membrane as a helical span at residues 68–88 (ISIFICVLTTLLITCLVIKIC). At 89–133 (RSARKIRKTRKYDIITTPAERVEMAPLNEENDEEDDSTLFDVKYR) the chain is on the cytoplasmic side. Residues 113-133 (APLNEENDEEDDSTLFDVKYR) form a disordered region. Positions 117 to 126 (EENDEEDDST) are enriched in acidic residues.

This sequence belongs to the FAM174 family.

The protein localises to the cell membrane. The protein resides in the golgi apparatus. In terms of biological role, essential for Golgi structural integrity. This is Membrane protein FAM174B (Fam174b) from Danio rerio (Zebrafish).